A 72-amino-acid chain; its full sequence is uncharacterized protein (72 aa).

The N-terminal stretch at 1-17 (MSLGLAIAVGIVLGVVA) is a signal peptide.

This is an uncharacterized protein from Schizosaccharomyces pombe (strain 972 / ATCC 24843) (Fission yeast).